We begin with the raw amino-acid sequence, 88 residues long: MAASPVLAVDNSSVAADQLKSIIERIERLEEEKAGLAGDIKDVYAEAKANGFDTKVLRKIISIRKRDHEERQEEEAILELYMQALGMV.

This sequence belongs to the UPF0335 family.

In Methylobacterium sp. (strain 4-46), this protein is UPF0335 protein M446_5200.